Here is a 402-residue protein sequence, read N- to C-terminus: Multidrug resistance protein MdtH (402 aa).

The next 11 membrane-spanning stretches (helical) occupy residues 13–33 (YFLL…FPLI), 34–54 (SIRF…ALGL), 99–116 (PWVL…GTLF), 139–159 (LLMM…SWLL), 165–185 (LVCG…AWLL), 214–234 (VLTL…LPVM), 243–263 (AAVK…LYPL), 277–297 (LMAG…ASNL), 300–320 (LFTL…ARET), 340–360 (LGLA…FDAG), and 368–388 (LPWA…WWQF).

This sequence belongs to the major facilitator superfamily. DHA1 family. MdtH (TC 2.A.1.2.21) subfamily.

It is found in the cell inner membrane. In Cronobacter sakazakii (strain ATCC BAA-894) (Enterobacter sakazakii), this protein is Multidrug resistance protein MdtH.